The primary structure comprises 248 residues: Cytochrome c oxidase subunit 2 (248 aa).

Residues M1–Y36 lie on the Mitochondrial intermembrane side of the membrane. A helical membrane pass occupies residues L37 to I57. Topologically, residues E58 to S75 are mitochondrial matrix. Residues I76 to L100 traverse the membrane as a helical segment. The Mitochondrial intermembrane portion of the chain corresponds to Y101 to S248. Positions 182, 217, 219, 221, 225, and 228 each coordinate Cu cation. Mg(2+) is bound at residue E219.

The protein belongs to the cytochrome c oxidase subunit 2 family. In terms of assembly, component of the cytochrome c oxidase (complex IV, CIV), a multisubunit enzyme composed of a catalytic core of 3 subunits and several supernumerary subunits. The complex exists as a monomer or a dimer and forms supercomplexes (SCs) in the inner mitochondrial membrane with ubiquinol-cytochrome c oxidoreductase (cytochrome b-c1 complex, complex III, CIII). Cu cation is required as a cofactor.

The protein resides in the mitochondrion inner membrane. The catalysed reaction is 4 Fe(II)-[cytochrome c] + O2 + 8 H(+)(in) = 4 Fe(III)-[cytochrome c] + 2 H2O + 4 H(+)(out). Component of the cytochrome c oxidase, the last enzyme in the mitochondrial electron transport chain which drives oxidative phosphorylation. The respiratory chain contains 3 multisubunit complexes succinate dehydrogenase (complex II, CII), ubiquinol-cytochrome c oxidoreductase (cytochrome b-c1 complex, complex III, CIII) and cytochrome c oxidase (complex IV, CIV), that cooperate to transfer electrons derived from NADH and succinate to molecular oxygen, creating an electrochemical gradient over the inner membrane that drives transmembrane transport and the ATP synthase. Cytochrome c oxidase is the component of the respiratory chain that catalyzes the reduction of oxygen to water. Electrons originating from reduced cytochrome c in the intermembrane space (IMS) are transferred via the dinuclear copper A center (CU(A)) of subunit 2 and heme A of subunit 1 to the active site in subunit 1, a binuclear center (BNC) formed by heme A3 and copper B (CU(B)). The BNC reduces molecular oxygen to 2 water molecules using 4 electrons from cytochrome c in the IMS and 4 protons from the mitochondrial matrix. The sequence is that of Cytochrome c oxidase subunit 2 (cox2) from Schizosaccharomyces pombe (strain 972 / ATCC 24843) (Fission yeast).